Here is a 205-residue protein sequence, read N- to C-terminus: Small ribosomal subunit protein uS4 (205 aa).

Residues 1–16 (MSKRESSKYKIDRRMG) show a composition bias toward basic and acidic residues. Positions 1–46 (MSKRESSKYKIDRRMGENIWGRPKSPVNRREYGPGQHGQRRKGKLS) are disordered. One can recognise an S4 RNA-binding domain in the interval 94–157 (SRLDAIVYRA…KQLVTVLEAV (64 aa)).

The protein belongs to the universal ribosomal protein uS4 family. Part of the 30S ribosomal subunit. Contacts protein S5. The interaction surface between S4 and S5 is involved in control of translational fidelity.

In terms of biological role, one of the primary rRNA binding proteins, it binds directly to 16S rRNA where it nucleates assembly of the body of the 30S subunit. Functionally, with S5 and S12 plays an important role in translational accuracy. This is Small ribosomal subunit protein uS4 from Rhizobium etli (strain CIAT 652).